The sequence spans 156 residues: Glutamine--fructose-6-phosphate aminotransferase [isomerizing] (156 aa).

One can recognise an SIS domain in the interval 4-146 (MAHHIVPARD…VLKGTDVDQP (143 aa)). Lys151 serves as the catalytic For Fru-6P isomerization activity.

Homodimer.

It is found in the cytoplasm. The catalysed reaction is D-fructose 6-phosphate + L-glutamine = D-glucosamine 6-phosphate + L-glutamate. Catalyzes the first step in hexosamine metabolism, converting fructose-6P into glucosamine-6P using glutamine as a nitrogen source. The chain is Glutamine--fructose-6-phosphate aminotransferase [isomerizing] (glmS) from Sphingobium yanoikuyae (Sphingomonas yanoikuyae).